A 1538-amino-acid polypeptide reads, in one-letter code: MAAPQDLDIAVWLALVHLEQYADTFRRHGLATAGAAQHLGHEELRHLGISATGHRKRILRLLRAGSAEGFLDSHLDNTMEPTPSPAPDAQPPKPVPKPRTVFGLSNPATAQRPGLSPIFWDPEVSRNSECTQRSSPLLPSSSEQPSVPNTMEMMPNAIYFGLDLRGRAQAAQDVTPDSSQATVPTPAFRPTTGTVHIMDPGCLYYGVQPVGIPGASDRRDGRGVCQERAEHRQDLETREDAGYASLELPGDSILSLPTQDAETSDDLISPYASFSSTADRPVPLLSGWLDKLSPQGNYVFQRRFVQFNGRSLMYFGSDKDPFPKGVIPLTAIEMTRSSKDNKFQVITGQRVFVFRTESEAQRDLWCSTLQSCLKEQRLLGHPRPPHPPRPLRTGTLELRGHKAKVFAALIPGELALYKSEQAFSLGIGICFIELQGCSVRETKSRSFDLLTPHRCFSFTAESGGARQSWAAALQEAVTETLSDYEVAEKVWSNPANRHCADCRASRPDWAAVNLGVVICKQCAGQHRALGSGISKVQSLKLDTSVWSNEIVQLFIVLGNDRANCFWAGALPPGEGLHPDSAPGPRGEFISRKYKLGLFRKPHPRHPDHSQLLQALCAAMAGPNLLKNMAQLLCVETSEGEEPLSPSALNGSLLSLLPSDSPGVYNEVVVPATYRGFLYCGSISNKAGAPPLRRGRDAPPRLWCVLGAALEMFASESSPEPLSLLQPQDIVCLGVSPPPADPGDLDRFPFSFELILTGGRIQHFATDGADSLEAWISAVGKWFSPLSCHQLLGPGLLRMGRLWLRSPSHAGLAPGLWLSGFGLLRGDHLFLCPAPGPGPPAPEDMVHLRRLQEISVVSAADTPDKKEHLVLVETGRTLYLQGEGRLDFAAWNTAIGGAAGGGGTGLQEQQMSRGDIPIIVDACISFVTQHGLRLEGVYRKGGARARSLRLLAEFRRDARSVKLRPREHFVEDVTDTLKRFFRELDDPVTSARLLPRWREAAELSQKNQRLEKYKEVISCLPRVNRRTLATLIGHLYRVQKCASLNQMCTRNLALLFAPSVFQTDGRGEHEVRVLQELIDGYISVFDIDSDQAAQIDLEVSLITTWKDVQLSQAGDLIMEVYIEQQLPDNCVTLKVSPTLTAEELTNQVLEMRGAASGTDLWVTFEILEHGELERPLHPKEKVLEQALQWCQLPEPCSASLLLRKVSMAHAGCLFTGVRRESPRVGLLRCREEPPRLLGNRFQERFFLVRGRCLLLLKEKKSSKPEREWSLEGAKVYLGIRKKLKPPTLWGFTLILEKMHLCLSCMDEEEMWDWTTSILKAQHDDQQSVVLRRRSSSDLARQKFGTMPLLPIRGDDSGATLLSANQTLRRLHNRRTLSMFFPMKSPQGSVEEQDELEEPVYEEPVYEEVGAFPELTKDTTFSSTWEWSAKSDPSLTSQRSFDQPPLSKASMLGHEERIPDPPPGPPSKSSSQARGSLEEQLLQELNNLILRKGEPASCPESSSQPTSPQAPSPTSLPTPTPSLPTQPPCTSNPPSSQPLT.

The region spanning Pro-4–Glu-68 is the SAM domain. Disordered stretches follow at residues Asp-72–Lys-97, Ser-125–Asn-149, and Ala-215–Gly-242. A compositionally biased stretch (pro residues) spans Thr-82–Lys-97. Residues Ser-216–Ala-241 are compositionally biased toward basic and acidic residues. 2 consecutive PH domains span residues Val-282–Lys-374 and Arg-389–Thr-478. In terms of domain architecture, Arf-GAP spans Glu-479 to Pro-606. PH domains are found at residues Ala-671 to Leu-785 and Leu-795 to Gly-901. The Rho-GAP domain occupies Thr-903–Phe-1084. The Ras-associating domain maps to Gly-1113 to Met-1206. One can recognise a PH 5 domain in the interval Glu-1219–His-1321. Thr-1344 bears the Phosphothreonine mark. 2 positions are modified to phosphotyrosine: Tyr-1399 and Tyr-1404. A compositionally biased stretch (polar residues) spans Trp-1425–Phe-1439. Residues Trp-1425–Thr-1538 form a disordered region. Phosphoserine is present on residues Ser-1438 and Ser-1474. Composition is skewed to low complexity over residues Glu-1476 to Leu-1486 and Ala-1494 to Ser-1505. Pro residues predominate over residues Pro-1506–Ser-1529.

As to quaternary structure, interacts (via SAM domain) with INPPL1/SHIP2. Post-translationally, tyrosine phosphorylated at a low basal level. PDGF treatment stimulates phosphorylation. Tyrosine phosphorylation is increased in cells that are in the process of becoming attached to a substrate and that start spreading and flattening.

The protein resides in the cytoplasm. Its subcellular location is the cell membrane. It is found in the cytoskeleton. The protein localises to the cell projection. It localises to the lamellipodium. The protein resides in the ruffle. In terms of biological role, phosphatidylinositol 3,4,5-trisphosphate-dependent GTPase-activating protein that modulates actin cytoskeleton remodeling by regulating ARF and RHO family members. Is activated by phosphatidylinositol 3,4,5-trisphosphate (PtdIns(3,4,5)P3) binding. Can be activated by phosphatidylinositol 3,4-bisphosphate (PtdIns(3,4,5)P2) binding, albeit with lower efficiency. Acts preferentially on ARF5 and on RHOA. This Mus musculus (Mouse) protein is Arf-GAP with Rho-GAP domain, ANK repeat and PH domain-containing protein 3 (Arap3).